Here is a 290-residue protein sequence, read N- to C-terminus: Inner membrane protein YebZ (290 aa).

Over 1-10 (MLAFTWIALR) the chain is Periplasmic. A helical membrane pass occupies residues 11 to 31 (FIHFTSLMLVFGFAMYGAWLA). Over 32-49 (PLTIRRLLAKRFLRLQQH) the chain is Cytoplasmic. Residues 50-70 (AAVWSLISATAMLAVQGGLMG) traverse the membrane as a helical segment. Topologically, residues 71 to 89 (TGWTDVFSPNIWQAVLQTQ) are periplasmic. Residues 90–110 (FGGIWLWQIVLALVTLIVALM) form a helical membrane-spanning segment. Topologically, residues 111–117 (QPRNMPR) are cytoplasmic. The helical transmembrane segment at 118–138 (LLFMLTTAQFILLAGVGHATL) threads the bilayer. At 139 to 151 (NEGVTAKIHQTNH) the chain is on the periplasmic side. The helical transmembrane segment at 152–172 (AIHLICAAAWFGGLLPVLWCM) threads the bilayer. At 173 to 195 (QLIKGRWRHQAIQALMRFSWCGH) the chain is on the cytoplasmic side. The chain crosses the membrane as a helical span at residues 196–216 (FAVIGVLASGVLNALLITGFP). Residues 217–222 (PTLTTY) lie on the Periplasmic side of the membrane. A helical membrane pass occupies residues 223 to 243 (WGQLLLLKAILVMIMVVIALA). Residues 244–260 (NRYVLVPRMRQDEDRAA) lie on the Cytoplasmic side of the membrane. A helical membrane pass occupies residues 261 to 281 (PWFVWMTKLEWAIGAVVLVII). Residues 282 to 290 (SLLATLEPF) are Periplasmic-facing.

It belongs to the CopD family.

It is found in the cell inner membrane. In Escherichia coli (strain K12), this protein is Inner membrane protein YebZ (yebZ).